We begin with the raw amino-acid sequence, 295 residues long: Pyrroline-5-carboxylate reductase (295 aa).

The protein belongs to the pyrroline-5-carboxylate reductase family.

It is found in the cytoplasm. It catalyses the reaction L-proline + NADP(+) = (S)-1-pyrroline-5-carboxylate + NADPH + 2 H(+). The catalysed reaction is L-proline + NAD(+) = (S)-1-pyrroline-5-carboxylate + NADH + 2 H(+). Its pathway is amino-acid biosynthesis; L-proline biosynthesis; L-proline from L-glutamate 5-semialdehyde: step 1/1. In terms of biological role, catalyzes the reduction of 1-pyrroline-5-carboxylate (PCA) to L-proline. This is Pyrroline-5-carboxylate reductase from Mycobacterium tuberculosis (strain CDC 1551 / Oshkosh).